The chain runs to 85 residues: Small ribosomal subunit protein uS17 (85 aa).

It belongs to the universal ribosomal protein uS17 family. As to quaternary structure, part of the 30S ribosomal subunit.

One of the primary rRNA binding proteins, it binds specifically to the 5'-end of 16S ribosomal RNA. The sequence is that of Small ribosomal subunit protein uS17 from Natranaerobius thermophilus (strain ATCC BAA-1301 / DSM 18059 / JW/NM-WN-LF).